Reading from the N-terminus, the 92-residue chain is Putative regulatory protein CTN_0877 (92 aa).

Belongs to the RemA family.

The protein is Putative regulatory protein CTN_0877 of Thermotoga neapolitana (strain ATCC 49049 / DSM 4359 / NBRC 107923 / NS-E).